The following is a 591-amino-acid chain: MIPGVREATAGHEPVKAELWKRIYSRVGSHWKGLILAVLLMAGAAATQPTLAVIMKPLIDGGFAGDKPQYIWSVPLAVIGLILLRGVCNFFSDYLLAWVANNVLLGIRREMFDRLLGLPDADFKRGDTGRLLNRFTIDAGNVTGYATDVITVLVRETLVVISLIAVLLYMSWLLTVIILVVMPISVWIARSFARRLRRINRETVNMNAELTRVVSEGIDGQRVIKLFDGYEAERGRFAYVNARLRRFAMRTAVADAALTPLTQVCIAVAVGAVIAVALGQANAGTLTAGAFAAFMSALAQIFDPIKRLTNLASKMQKMLVSAESVFTLVDQIPEVDEGQRTLAEPVRGKIEFRQIGHRFPEADRNTISDVSFTVEPGQTVALVGRSGSGKTTLVNMLPRFVLPTEGSILIDDVPINDVQLNSLRSHLSLVSQDVVLFDDTIAANVGYGALGKADDQRIHDALAAANLRDFVDSLPKGIHTPVGENAARLSGGQRQRLAIARALIKNAPILILDEATSALDNESERQVQSSLDRLMRGRTTLVIAHRLSTVQNADRIIVLDAGRIVEHGAHTELLAAGGLYATLYNMQFRED.

A run of 5 helical transmembrane segments spans residues L34–I54, I71–F91, L158–I178, L258–L278, and T285–I305. The ABC transmembrane type-1 domain occupies I35–K317. Residues I350–M586 form the ABC transporter domain. Residue G384 to T391 coordinates ATP.

Belongs to the ABC transporter superfamily. Lipid exporter (TC 3.A.1.106) family. Homodimer.

It is found in the cell inner membrane. The enzyme catalyses ATP + H2O + lipid A-core oligosaccharideSide 1 = ADP + phosphate + lipid A-core oligosaccharideSide 2.. In terms of biological role, involved in lipopolysaccharide (LPS) biosynthesis. Translocates lipid A-core from the inner to the outer leaflet of the inner membrane. Transmembrane domains (TMD) form a pore in the inner membrane and the ATP-binding domain (NBD) is responsible for energy generation. The sequence is that of ATP-dependent lipid A-core flippase from Bordetella avium (strain 197N).